Reading from the N-terminus, the 543-residue chain is MPEYPTEDTNASGKTSGSSPDDHTDDNAPSFFSCENLCIVQVPVSTGSLNGFSIGFVAVYMHLYEIFSGCSALESSGACSGNSKCTWIPNNSTCVWKDCNGAAGATTCKDGSGYNSLESGLFACSMIVGSMIGSIFAGKFLSKFGLKMSFIVSGVLGIVGSALIHVATRGSTLWVMCVGRFLMGLVLGLVCVASPMYVNENAHPKYRKTIGVLFQVFTTFGIMFAALLGLAIVKTPGHDKASGLLWRMQVFCSVSTALSALLLVLGLVVRKSKTSFAGGVDSAGEGVLDPNEYSVRQMLGPLAVGAVTAGTLQLTGINAVMNYAPEIMRNIGMDPMEGNSAVMSWNFVTALVAIPLVSRFTMRQLFLACSFMASCACLIMCGIPVYPGVASVDNRNIVATVGIAVFIAAFEFGVGSCFFVLAQDLFPRSFRPTGSSFVVMAQFIFNIMINLLYPITVEAISGGKGKSPEKGQSVSFIIFGIIGIICFVLQLRYLTPWEDGQGTSTSPTARCNAPTSPNNGEGEPATADMSPVEMSTPKHSGAA.

The tract at residues 1–24 is disordered; the sequence is MPEYPTEDTNASGKTSGSSPDDHT. At 1 to 38 the chain is on the cytoplasmic side; sequence MPEYPTEDTNASGKTSGSSPDDHTDDNAPSFFSCENLC. A compositionally biased stretch (polar residues) spans 7 to 19; the sequence is EDTNASGKTSGSS. Residues 39–59 traverse the membrane as a helical segment; that stretch reads IVQVPVSTGSLNGFSIGFVAV. The Extracellular portion of the chain corresponds to 60 to 120; that stretch reads YMHLYEIFSG…GSGYNSLESG (61 aa). N90 and N91 each carry an N-linked (GlcNAc...) asparagine glycan. The chain crosses the membrane as a helical span at residues 121–141; the sequence is LFACSMIVGSMIGSIFAGKFL. The Cytoplasmic segment spans residues 142–147; the sequence is SKFGLK. A helical membrane pass occupies residues 148–168; sequence MSFIVSGVLGIVGSALIHVAT. Residues 169–172 are Extracellular-facing; that stretch reads RGST. Residues 173 to 193 traverse the membrane as a helical segment; the sequence is LWVMCVGRFLMGLVLGLVCVA. Residues 194-212 are Cytoplasmic-facing; the sequence is SPMYVNENAHPKYRKTIGV. The helical transmembrane segment at 213 to 233 threads the bilayer; sequence LFQVFTTFGIMFAALLGLAIV. Over 234 to 248 the chain is Extracellular; the sequence is KTPGHDKASGLLWRM. A helical transmembrane segment spans residues 249–269; sequence QVFCSVSTALSALLLVLGLVV. Residues 270–300 lie on the Cytoplasmic side of the membrane; that stretch reads RKSKTSFAGGVDSAGEGVLDPNEYSVRQMLG. Residues 301 to 321 traverse the membrane as a helical segment; that stretch reads PLAVGAVTAGTLQLTGINAVM. The Extracellular segment spans residues 322–337; that stretch reads NYAPEIMRNIGMDPME. The chain crosses the membrane as a helical span at residues 338-358; it reads GNSAVMSWNFVTALVAIPLVS. Over 359 to 364 the chain is Cytoplasmic; the sequence is RFTMRQ. A helical transmembrane segment spans residues 365–385; the sequence is LFLACSFMASCACLIMCGIPV. The Extracellular portion of the chain corresponds to 386–400; the sequence is YPGVASVDNRNIVAT. A helical transmembrane segment spans residues 401–421; it reads VGIAVFIAAFEFGVGSCFFVL. At 422 to 436 the chain is on the cytoplasmic side; that stretch reads AQDLFPRSFRPTGSS. A helical membrane pass occupies residues 437–457; the sequence is FVVMAQFIFNIMINLLYPITV. Residues 458–470 lie on the Extracellular side of the membrane; it reads EAISGGKGKSPEK. A helical membrane pass occupies residues 471-491; it reads GQSVSFIIFGIIGIICFVLQL. The Cytoplasmic portion of the chain corresponds to 492-543; sequence RYLTPWEDGQGTSTSPTARCNAPTSPNNGEGEPATADMSPVEMSTPKHSGAA. The segment covering 503 to 519 has biased composition (polar residues); the sequence is TSTSPTARCNAPTSPNN. Residues 503–543 are disordered; the sequence is TSTSPTARCNAPTSPNNGEGEPATADMSPVEMSTPKHSGAA.

This sequence belongs to the major facilitator superfamily. Sugar transporter (TC 2.A.1.1) family.

It localises to the membrane. Facilitative glucose transporter. Binds D-fructose and cytochalasin-B, but not D-galactose. The sequence is that of Glucose transporter HT1 (HT1) from Trypanosoma vivax (Duttonella vivax).